The sequence spans 197 residues: Probable molybdenum cofactor guanylyltransferase (197 aa).

GTP-binding positions include 12–14 (LAG), K24, D71, and D103. D103 provides a ligand contact to Mg(2+).

It belongs to the MobA family. The cofactor is Mg(2+).

It is found in the cytoplasm. The enzyme catalyses Mo-molybdopterin + GTP + H(+) = Mo-molybdopterin guanine dinucleotide + diphosphate. Functionally, transfers a GMP moiety from GTP to Mo-molybdopterin (Mo-MPT) cofactor (Moco or molybdenum cofactor) to form Mo-molybdopterin guanine dinucleotide (Mo-MGD) cofactor. The polypeptide is Probable molybdenum cofactor guanylyltransferase (Mycobacterium avium (strain 104)).